Here is an 871-residue protein sequence, read N- to C-terminus: DNA mismatch repair protein MutS (871 aa).

ATP is bound at residue 620–627 (GPNMGGKS). The interval 806–837 (HHGGLNEPKQATMELTPPPEAIPSHTEKRNPL) is disordered.

This sequence belongs to the DNA mismatch repair MutS family.

In terms of biological role, this protein is involved in the repair of mismatches in DNA. It is possible that it carries out the mismatch recognition step. This protein has a weak ATPase activity. The sequence is that of DNA mismatch repair protein MutS from Idiomarina loihiensis (strain ATCC BAA-735 / DSM 15497 / L2-TR).